The chain runs to 165 residues: Late embryogenesis abundant protein D-113 (165 aa).

Low complexity predominate over residues 1–13; sequence MQSMKDAAASAKA. Disordered stretches follow at residues 1–76 and 92–165; these read MQSM…IGGT and GGTG…YRSY. Residues 14 to 60 show a composition bias toward basic and acidic residues; sequence GMEKAKASMQEKVDQMKTRDPNEKEMARERKEERQEDAELRKQEARH. Gly residues predominate over residues 67–76; it reads HVGGGGIGGT. Over residues 132 to 155 the composition is skewed to polar residues; the sequence is TTGNQDFPNAASNNAGTRRNTRGG.

Belongs to the LEA type 1 family.

Functionally, LEA proteins are late embryonic proteins abundant in higher plant seed embryos. There are two subsets of LEA proteins (5a and 5b), the first ones are expressed when the cotyledon weight reach 80 mg and the second set are expressed above 100 mg. The function of those proteins is not known. The protein is Late embryogenesis abundant protein D-113 of Gossypium hirsutum (Upland cotton).